Reading from the N-terminus, the 117-residue chain is Large ribosomal subunit protein bL19 (117 aa).

It belongs to the bacterial ribosomal protein bL19 family.

Its function is as follows. This protein is located at the 30S-50S ribosomal subunit interface and may play a role in the structure and function of the aminoacyl-tRNA binding site. The sequence is that of Large ribosomal subunit protein bL19 from Kineococcus radiotolerans (strain ATCC BAA-149 / DSM 14245 / SRS30216).